Here is a 105-residue protein sequence, read N- to C-terminus: Small ribosomal subunit protein eS24 (105 aa).

Residues 85–105 form a disordered region; sequence SVIAKNEEPEEEPEEEAEDAE. A compositionally biased stretch (acidic residues) spans 92 to 105; the sequence is EPEEEPEEEAEDAE.

It belongs to the eukaryotic ribosomal protein eS24 family.

The sequence is that of Small ribosomal subunit protein eS24 from Methanosphaera stadtmanae (strain ATCC 43021 / DSM 3091 / JCM 11832 / MCB-3).